A 134-amino-acid polypeptide reads, in one-letter code: MTRDQNGTWEMESNDNFEGYMKALDIDFATRKIAVALTQTKIIEQDGDKFKTKTNSTFRNYDLDFTVGVEFDEYTKGLDNRNVKTLIIWEGDALVCVQKGEKENRGWKQWVEGDKLYLELTCGDQVCRQVFKKK.

All-trans-retinol contacts are provided by Lys41 and Gln109.

This sequence belongs to the calycin superfamily. Fatty-acid binding protein (FABP) family.

It is found in the cytoplasm. Its function is as follows. Intracellular transport of retinol. In Sus scrofa (Pig), this protein is Retinol-binding protein 2 (RBP2).